We begin with the raw amino-acid sequence, 337 residues long: GCPQGSISGPYMWNLCMNGLLDRLSAMNERIVAYADDLMIVANGNSRMEMERMADECMRIVYEWGREVGVSISEKKTVCIMLKGKLNVDGRRMRVAVAEGTISSIGYVKSARYLGVCMGERMSFADDIRGLITKVMGAIGGLRRVMRKEWGVKKKTAYTWAKGLLLAGVMYGSSVWYEGMKYKTMRESMNSIQRCAMYACLRVCRTVSTEAMQVLLGWLPCDLECVKDKCVQGSAWHRNDESDLVTDAEIAEKRARSCKLMKEREHEIWQRRWCESTKGRVMHEWLCDVNFACERMWFEPSLRVGYILTGHGTLNAWLYDRDPLDSAACPCGAPRED.

The region spanning 1–118 is the Reverse transcriptase domain; that stretch reads GCPQGSISGP…KSARYLGVCM (118 aa). The tract at residues 253–337 is nucleic acid-binding endonuclease; sequence KRARSCKLMK…ACPCGAPRED (85 aa).

The catalysed reaction is DNA(n) + a 2'-deoxyribonucleoside 5'-triphosphate = DNA(n+1) + diphosphate. The polypeptide is Retrovirus-related Pol polyprotein from type-1 retrotransposable element R1 (Nasonia vitripennis (Parasitic wasp)).